A 313-amino-acid chain; its full sequence is Ribosomal RNA small subunit methyltransferase H (313 aa).

S-adenosyl-L-methionine is bound by residues 36-38, Asp56, Phe80, Asp102, and Gln109; that span reads GGH.

It belongs to the methyltransferase superfamily. RsmH family.

Its subcellular location is the cytoplasm. It carries out the reaction cytidine(1402) in 16S rRNA + S-adenosyl-L-methionine = N(4)-methylcytidine(1402) in 16S rRNA + S-adenosyl-L-homocysteine + H(+). Specifically methylates the N4 position of cytidine in position 1402 (C1402) of 16S rRNA. The polypeptide is Ribosomal RNA small subunit methyltransferase H (Haemophilus ducreyi (strain 35000HP / ATCC 700724)).